The following is a 61-amino-acid chain: Small ribosomal subunit protein uS14 (61 aa).

Zn(2+) contacts are provided by Cys24, Cys27, Cys40, and Cys43.

This sequence belongs to the universal ribosomal protein uS14 family. Zinc-binding uS14 subfamily. As to quaternary structure, part of the 30S ribosomal subunit. Contacts proteins S3 and S10. Requires Zn(2+) as cofactor.

Its function is as follows. Binds 16S rRNA, required for the assembly of 30S particles and may also be responsible for determining the conformation of the 16S rRNA at the A site. The chain is Small ribosomal subunit protein uS14 from Streptococcus thermophilus (strain CNRZ 1066).